Here is a 217-residue protein sequence, read N- to C-terminus: Protein GrpE (217 aa).

The interval 1–63 (MAETSNSENK…AADSELSLQS (63 aa)) is disordered. Basic and acidic residues predominate over residues 10-32 (KTSEEAKASEKNSRSITLEETKL). Over residues 37–63 (SEESTQTTESTQAQAAEAADSELSLQS) the composition is skewed to low complexity.

The protein belongs to the GrpE family. Homodimer.

The protein resides in the cytoplasm. Participates actively in the response to hyperosmotic and heat shock by preventing the aggregation of stress-denatured proteins, in association with DnaK and GrpE. It is the nucleotide exchange factor for DnaK and may function as a thermosensor. Unfolded proteins bind initially to DnaJ; upon interaction with the DnaJ-bound protein, DnaK hydrolyzes its bound ATP, resulting in the formation of a stable complex. GrpE releases ADP from DnaK; ATP binding to DnaK triggers the release of the substrate protein, thus completing the reaction cycle. Several rounds of ATP-dependent interactions between DnaJ, DnaK and GrpE are required for fully efficient folding. This Leptospira borgpetersenii serovar Hardjo-bovis (strain JB197) protein is Protein GrpE.